The chain runs to 128 residues: MRFAIVVTGPAYGTQQASSAFQFAQALIAEGHKLSSVFFYREGVYNANQLTSPASDEFDLVRGWQQLNAQHGVALNICVAAALRRGIVDETEAGRLGLASSNLQPGFTLSGLGALAEASLTCDRVVQF.

C78 (cysteine persulfide intermediate) is an active-site residue.

The protein belongs to the DsrE/TusD family. In terms of assembly, heterohexamer, formed by a dimer of trimers. The hexameric TusBCD complex contains 2 copies each of TusB, TusC and TusD. The TusBCD complex interacts with TusE.

It localises to the cytoplasm. Functionally, part of a sulfur-relay system required for 2-thiolation of 5-methylaminomethyl-2-thiouridine (mnm(5)s(2)U) at tRNA wobble positions. Accepts sulfur from TusA and transfers it in turn to TusE. The protein is Sulfurtransferase TusD of Shigella flexneri serotype 5b (strain 8401).